Consider the following 187-residue polypeptide: GTP cyclohydrolase 1 (187 aa).

3 residues coordinate Zn(2+): C76, H79, and C148.

This sequence belongs to the GTP cyclohydrolase I family. In terms of assembly, toroid-shaped homodecamer, composed of two pentamers of five dimers.

It catalyses the reaction GTP + H2O = 7,8-dihydroneopterin 3'-triphosphate + formate + H(+). It functions in the pathway cofactor biosynthesis; 7,8-dihydroneopterin triphosphate biosynthesis; 7,8-dihydroneopterin triphosphate from GTP: step 1/1. In Streptococcus agalactiae serotype Ia (strain ATCC 27591 / A909 / CDC SS700), this protein is GTP cyclohydrolase 1.